The following is a 219-amino-acid chain: uncharacterized protein (219 aa).

The first 26 residues, 1-26, serve as a signal peptide directing secretion; the sequence is MNDRGVPNSRTGPSLLALLPAANSYA. 2 disordered regions span residues 36 to 57 and 88 to 219; these read AVGV…TRGG and SGLG…GLCE. The segment covering 127–173 has biased composition (low complexity); the sequence is LSPPSALGSSPAGRGRPAPAIAAAKSSPLSASAAPGRCGARPRAPSR. Basic residues predominate over residues 176-202; that stretch reads RERRPRGNPRAPLRRGARGRRRSHTRG.

This is an uncharacterized protein from Gallid herpesvirus 2 (strain Chicken/Md5/ATCC VR-987) (GaHV-2).